The sequence spans 85 residues: uncharacterized protein (85 aa).

Residue Ser22 is modified to Phosphoserine.

Its subcellular location is the cytoplasm. It localises to the nucleus. This is an uncharacterized protein from Saccharomyces cerevisiae (strain ATCC 204508 / S288c) (Baker's yeast).